The sequence spans 2367 residues: Probable G-protein coupled receptor 179 (2367 aa).

The signal sequence occupies residues M1–A25. Residues L26–R381 are Extracellular-facing. The segment at Y62–W245 is cache-like region. N75 is a glycosylation site (N-linked (GlcNAc...) asparagine). C76 and C236 form a disulfide bridge. N-linked (GlcNAc...) asparagine glycosylation occurs at N298. The helical transmembrane segment at A382–S402 threads the bilayer. The Cytoplasmic segment spans residues Y403–G415. The chain crosses the membrane as a helical span at residues V416–L436. Topologically, residues Y437–R444 are extracellular. A helical membrane pass occupies residues C445–L465. A disulfide bond links C445 and C537. Over K466–R493 the chain is Cytoplasmic. A helical membrane pass occupies residues L494–E514. The Extracellular portion of the chain corresponds to R515–D543. The helical transmembrane segment at Y544–T564 threads the bilayer. Over R565–R575 the chain is Cytoplasmic. A helical membrane pass occupies residues Y576–A594. The Extracellular portion of the chain corresponds to R595–T607. The helical transmembrane segment at L608–I628 threads the bilayer. Residues P629–E2367 are Cytoplasmic-facing. 12 disordered regions span residues A731 to A818, R869 to P932, K1039 to S1083, R1098 to T1198, E1247 to E1431, P1537 to A1557, D1577 to Q1672, A1723 to E1757, S1823 to L1852, A1886 to E2108, W2133 to G2212, and G2308 to E2367. Over residues S738–L759 the composition is skewed to low complexity. Residues S773–D782 show a composition bias toward basic and acidic residues. Positions K1039–K1067 are enriched in basic and acidic residues. Residues L1153–M1164 are compositionally biased toward polar residues. 4 stretches are compositionally biased toward basic and acidic residues: residues E1171–R1181, R1277–P1299, G1341–G1362, and E1390–Q1407. A compositionally biased stretch (basic and acidic residues) spans E1615–E1639. Basic and acidic residues-rich tracts occupy residues A1840 to R1851, A1903 to P1920, S1970 to Q1979, V2023 to P2054, K2061 to Q2070, and T2165 to E2180. Residues P2326–L2340 show a composition bias toward low complexity.

Belongs to the G-protein coupled receptor 3 family. As to quaternary structure, homodimer. Associates with the R7 group RGS-GNB5 complexes, composed of an R7 group RGS subunit (RGS6, RGS7, RGS9 or RGS11) and GNB5, promoting their localization to the cell membrane and regulating the GTPase activator activity of R7 RGS proteins. Interacts with TRPM1. Interacts with GRM6. Interacts with EGFLAM; transsynaptic interaction is required for synaptic organization of photoreceptor cells. As to expression, expressed in the retina.

It is found in the cell membrane. Its subcellular location is the postsynaptic cell membrane. The protein resides in the cell projection. It localises to the dendrite. Orphan receptor involved in vision. Required for signal transduction through retinal depolarizing bipolar cells. Acts as an atypical G-protein coupled receptor that recruits and regulates the R7 group RGS-GNB5 complexes instead of activating G proteins: promotes the GTPase activator activity of R7 RGS proteins, increasing the GTPase activity of G protein alpha subunits, thereby driving them into their inactive GDP-bound form. Associates with components of metabotropic signaling cascade in retina ON-bipolar neurons, such as TRPM1 and GRM6: may control the ability of the GRM6 cascade to gate TRPM1. In Homo sapiens (Human), this protein is Probable G-protein coupled receptor 179.